A 394-amino-acid chain; its full sequence is Sugar efflux transporter C (394 aa).

The Periplasmic portion of the chain corresponds to 1–10 (MQKTATTPSK). A helical transmembrane segment spans residues 11-31 (ILDLTAAAFLLVAFLTGIAGA). Topologically, residues 32–49 (LQTPTLSIFLADELKARP) are cytoplasmic. A helical membrane pass occupies residues 50–70 (IMVGFFFTGSAIMGILVSQFL). Topologically, residues 71 to 80 (ARHSDKQGDR) are periplasmic. Residues 81 to 101 (KLLILLCCLFGVLACTLFAWN) form a helical membrane-spanning segment. Topologically, residues 102–104 (RNY) are cytoplasmic. Residues 105–125 (FILLSTGVLLSSFASTANPQM) traverse the membrane as a helical segment. The Periplasmic portion of the chain corresponds to 126 to 150 (FALAREHADRTGRETVMFSTFLRAQ). A helical transmembrane segment spans residues 151-171 (ISLAWVIGPPLAYELAMGFSF). A topological domain (cytoplasmic) is located at residue K172. Residues 173–193 (VMYLTAAIAFVVCGLIVWLFL) traverse the membrane as a helical segment. The Periplasmic portion of the chain corresponds to 194–224 (PSIQRNIPVVTQPVEILPSTHRKRDTRLLFV). The chain crosses the membrane as a helical span at residues 225–245 (VCSMMWAANNLYMINMPLFII). At 246–253 (DELHLTDK) the chain is on the cytoplasmic side. A helical transmembrane segment spans residues 254–274 (LTGEMIGIAAGLEIPMMLIAG). At 275–283 (YYMKRIGKR) the chain is on the periplasmic side. Residues 284–304 (LLMLIAIVSGMCFYASVLMAT) form a helical membrane-spanning segment. Residues 305-310 (TPAVEL) lie on the Cytoplasmic side of the membrane. The helical transmembrane segment at 311 to 331 (ELQILNAIFLGILCGIGMLYF) threads the bilayer. Residues 332–370 (QDLMPEKIGSATTLYANTSRVGWIIAGSVDGIMVEIWSY) lie on the Periplasmic side of the membrane. A helical membrane pass occupies residues 371–391 (HALFWLAIGMLGIAMICLLFI). The Cytoplasmic portion of the chain corresponds to 392 to 394 (KDI).

The protein belongs to the major facilitator superfamily. Set transporter family.

Its subcellular location is the cell inner membrane. In terms of biological role, involved in the efflux of sugars. The physiological role may be the detoxification of non-metabolizable sugar analogs. The sequence is that of Sugar efflux transporter C (setC) from Escherichia coli (strain K12).